Consider the following 334-residue polypeptide: Ornithine carbamoyltransferase (334 aa).

Residues serine 56–threonine 59, glutamine 83, arginine 107, and histidine 134–glutamine 137 each bind carbamoyl phosphate. Residues asparagine 168, aspartate 232, and serine 236–methionine 237 contribute to the L-ornithine site. Residues cysteine 274–leucine 275 and arginine 320 each bind carbamoyl phosphate.

This sequence belongs to the aspartate/ornithine carbamoyltransferase superfamily. OTCase family.

Its subcellular location is the cytoplasm. The catalysed reaction is carbamoyl phosphate + L-ornithine = L-citrulline + phosphate + H(+). Its pathway is amino-acid biosynthesis; L-arginine biosynthesis; L-arginine from L-ornithine and carbamoyl phosphate: step 1/3. Functionally, reversibly catalyzes the transfer of the carbamoyl group from carbamoyl phosphate (CP) to the N(epsilon) atom of ornithine (ORN) to produce L-citrulline. The sequence is that of Ornithine carbamoyltransferase from Shigella boydii serotype 4 (strain Sb227).